The following is a 446-amino-acid chain: uncharacterized protein (446 aa).

A run of 4 helical transmembrane segments spans residues phenylalanine 69–leucine 89, phenylalanine 98–alanine 118, histidine 169–valine 189, and glycine 247–valine 267.

It localises to the membrane. This is an uncharacterized protein from Neisseria meningitidis serogroup B (strain ATCC BAA-335 / MC58).